The chain runs to 371 residues: Chaperone protein DnaJ (371 aa).

Residues 5 to 69 (EFYDRLGVSK…QKRAAYDQYG (65 aa)) enclose the J domain. The segment at 127–209 (GAEKEVSYNR…CHGTGHEKKT (83 aa)) adopts a CR-type zinc-finger fold. Zn(2+) is bound by residues Cys-140, Cys-143, Cys-157, Cys-160, Cys-183, Cys-186, Cys-197, and Cys-200. CXXCXGXG motif repeat units lie at residues 140 to 147 (CHTCSGSG), 157 to 164 (CQKCHGSG), 183 to 190 (CDVCQGSG), and 197 to 204 (CPTCHGTG).

This sequence belongs to the DnaJ family. In terms of assembly, homodimer. Zn(2+) serves as cofactor.

It localises to the cytoplasm. Participates actively in the response to hyperosmotic and heat shock by preventing the aggregation of stress-denatured proteins and by disaggregating proteins, also in an autonomous, DnaK-independent fashion. Unfolded proteins bind initially to DnaJ; upon interaction with the DnaJ-bound protein, DnaK hydrolyzes its bound ATP, resulting in the formation of a stable complex. GrpE releases ADP from DnaK; ATP binding to DnaK triggers the release of the substrate protein, thus completing the reaction cycle. Several rounds of ATP-dependent interactions between DnaJ, DnaK and GrpE are required for fully efficient folding. Also involved, together with DnaK and GrpE, in the DNA replication of plasmids through activation of initiation proteins. The polypeptide is Chaperone protein DnaJ (Streptococcus agalactiae serotype Ia (strain ATCC 27591 / A909 / CDC SS700)).